The chain runs to 108 residues: uncharacterized protein (108 aa).

Positions 7-106 (CPRFEKAVDI…WATEWIDPSF (100 aa)) constitute an HTH hxlR-type domain.

This is an uncharacterized protein from Bacillus subtilis (strain 168).